Here is a 418-residue protein sequence, read N- to C-terminus: Imidazolonepropionase (418 aa).

Residues His80 and His82 each contribute to the Fe(3+) site. His80 and His82 together coordinate Zn(2+). Residues Arg89, Tyr152, and His185 each contribute to the 4-imidazolone-5-propanoate site. Position 152 (Tyr152) interacts with N-formimidoyl-L-glutamate. His250 is a binding site for Fe(3+). Residue His250 participates in Zn(2+) binding. Residue Gln253 participates in 4-imidazolone-5-propanoate binding. Asp325 is a Fe(3+) binding site. Asp325 is a Zn(2+) binding site. 2 residues coordinate N-formimidoyl-L-glutamate: Asn327 and Gly329. Ser330 is a binding site for 4-imidazolone-5-propanoate.

This sequence belongs to the metallo-dependent hydrolases superfamily. HutI family. Requires Zn(2+) as cofactor. It depends on Fe(3+) as a cofactor.

It localises to the cytoplasm. It carries out the reaction 4-imidazolone-5-propanoate + H2O = N-formimidoyl-L-glutamate. Its pathway is amino-acid degradation; L-histidine degradation into L-glutamate; N-formimidoyl-L-glutamate from L-histidine: step 3/3. Functionally, catalyzes the hydrolytic cleavage of the carbon-nitrogen bond in imidazolone-5-propanoate to yield N-formimidoyl-L-glutamate. It is the third step in the universal histidine degradation pathway. This chain is Imidazolonepropionase, found in Solibacter usitatus (strain Ellin6076).